A 273-amino-acid chain; its full sequence is Chaperone protein PsaB (273 aa).

An N-terminal signal peptide occupies residues 1 to 31; that stretch reads MKNLFFSAYKKVFSYITSIVIFMVSLPYAYS. A disulfide bridge connects residues C128 and C163.

The protein belongs to the periplasmic pilus chaperone family.

It localises to the periplasm. In terms of biological role, required for the biogenesis of the pH 6 antigen. The polypeptide is Chaperone protein PsaB (psaB) (Yersinia pestis).